We begin with the raw amino-acid sequence, 255 residues long: Malonyl-[acyl-carrier protein] O-methyltransferase (255 aa).

It belongs to the methyltransferase superfamily.

The enzyme catalyses malonyl-[ACP] + S-adenosyl-L-methionine = malonyl-[ACP] methyl ester + S-adenosyl-L-homocysteine. Its pathway is cofactor biosynthesis; biotin biosynthesis. Functionally, converts the free carboxyl group of a malonyl-thioester to its methyl ester by transfer of a methyl group from S-adenosyl-L-methionine (SAM). It allows to synthesize pimeloyl-ACP via the fatty acid synthetic pathway. This Porphyromonas gingivalis (strain ATCC BAA-308 / W83) protein is Malonyl-[acyl-carrier protein] O-methyltransferase.